Reading from the N-terminus, the 481-residue chain is Cobyric acid synthase (481 aa).

The 188-residue stretch at 248-435 (ALTVAWLAFS…LHGMFGSDRF (188 aa)) folds into the GATase cobBQ-type domain. Cys330 (nucleophile) is an active-site residue. His427 is an active-site residue.

It belongs to the CobB/CobQ family. CobQ subfamily.

It participates in cofactor biosynthesis; adenosylcobalamin biosynthesis. Its function is as follows. Catalyzes amidations at positions B, D, E, and G on adenosylcobyrinic A,C-diamide. NH(2) groups are provided by glutamine, and one molecule of ATP is hydrogenolyzed for each amidation. This chain is Cobyric acid synthase, found in Cereibacter sphaeroides (strain ATCC 17025 / ATH 2.4.3) (Rhodobacter sphaeroides).